The following is a 229-amino-acid chain: Large ribosomal subunit protein uL1 (229 aa).

Belongs to the universal ribosomal protein uL1 family. Part of the 50S ribosomal subunit.

Functionally, binds directly to 23S rRNA. The L1 stalk is quite mobile in the ribosome, and is involved in E site tRNA release. Its function is as follows. Protein L1 is also a translational repressor protein, it controls the translation of the L11 operon by binding to its mRNA. The sequence is that of Large ribosomal subunit protein uL1 from Rhodopseudomonas palustris (strain HaA2).